The chain runs to 213 residues: Vacuolar ATPase assembly integral membrane protein vph2 (213 aa).

Helical transmembrane passes span 113-133 and 142-162; these read ISAI…VWYC and KIAL…FLYV.

It localises to the endoplasmic reticulum membrane. Required for vacuolar ATPase assembly. This Schizosaccharomyces pombe (strain 972 / ATCC 24843) (Fission yeast) protein is Vacuolar ATPase assembly integral membrane protein vph2 (vph2).